Here is a 117-residue protein sequence, read N- to C-terminus: UPF0122 protein Dred_2057 (117 aa).

It belongs to the UPF0122 family.

Its function is as follows. Might take part in the signal recognition particle (SRP) pathway. This is inferred from the conservation of its genetic proximity to ftsY/ffh. May be a regulatory protein. The chain is UPF0122 protein Dred_2057 from Desulforamulus reducens (strain ATCC BAA-1160 / DSM 100696 / MI-1) (Desulfotomaculum reducens).